The chain runs to 296 residues: Elongation factor Ts (296 aa).

The interval Thr-82 to Val-85 is involved in Mg(2+) ion dislocation from EF-Tu.

Belongs to the EF-Ts family.

Its subcellular location is the cytoplasm. Associates with the EF-Tu.GDP complex and induces the exchange of GDP to GTP. It remains bound to the aminoacyl-tRNA.EF-Tu.GTP complex up to the GTP hydrolysis stage on the ribosome. This chain is Elongation factor Ts, found in Coxiella burnetii (strain CbuK_Q154) (Coxiella burnetii (strain Q154)).